The primary structure comprises 340 residues: Tryptophan--tRNA ligase (340 aa).

ATP is bound by residues 11 to 13 and 19 to 20; these read RPT and GH. The 'HIGH' region signature appears at 12-20; sequence PTGKLHLGH. Asp-140 lines the L-tryptophan pocket. ATP-binding positions include 152-154, Leu-194, and 202-206; these read GND and KMSKS. The 'KMSKS' region signature appears at 202–206; that stretch reads KMSKS.

The protein belongs to the class-I aminoacyl-tRNA synthetase family. As to quaternary structure, homodimer.

It localises to the cytoplasm. The catalysed reaction is tRNA(Trp) + L-tryptophan + ATP = L-tryptophyl-tRNA(Trp) + AMP + diphosphate + H(+). Its function is as follows. Catalyzes the attachment of tryptophan to tRNA(Trp). This chain is Tryptophan--tRNA ligase, found in Streptococcus mutans serotype c (strain ATCC 700610 / UA159).